The following is a 160-amino-acid chain: ATP synthase subunit delta, mitochondrial (160 aa).

Residues 1–22 (MLRSIIGKSASRSLNFVAKRSY) constitute a mitochondrion transit peptide.

Belongs to the ATPase epsilon chain family. As to quaternary structure, F-type ATPases have 2 components, CF(1) - the catalytic core - and CF(0) - the membrane proton channel. CF(1) has five subunits: alpha(3), beta(3), gamma(1), delta(1), epsilon(1). CF(0) has three main subunits: a, b and c.

Its subcellular location is the mitochondrion. It localises to the mitochondrion inner membrane. Functionally, mitochondrial membrane ATP synthase (F(1)F(0) ATP synthase or Complex V) produces ATP from ADP in the presence of a proton gradient across the membrane which is generated by electron transport complexes of the respiratory chain. F-type ATPases consist of two structural domains, F(1) - containing the extramembraneous catalytic core, and F(0) - containing the membrane proton channel, linked together by a central stalk and a peripheral stalk. During catalysis, ATP turnover in the catalytic domain of F(1) is coupled via a rotary mechanism of the central stalk subunits to proton translocation. Part of the complex F(1) domain and of the central stalk which is part of the complex rotary element. Rotation of the central stalk against the surrounding alpha(3)beta(3) subunits leads to hydrolysis of ATP in three separate catalytic sites on the beta subunits. This Saccharomyces cerevisiae (strain ATCC 204508 / S288c) (Baker's yeast) protein is ATP synthase subunit delta, mitochondrial (ATP16).